Consider the following 236-residue polypeptide: uncharacterized protein (236 aa).

3 residues coordinate NADP(+): Asp-22, Asn-49, and Lys-82. Active-site proton donor residues include Ser-100 and Tyr-114. Tyr-114 and Lys-118 together coordinate NADP(+). The active-site Lowers pKa of active site Tyr is the Lys-118.

Belongs to the short-chain dehydrogenases/reductases (SDR) family.

Its subcellular location is the cytoplasm. It localises to the nucleus. This is an uncharacterized protein from Schizosaccharomyces pombe (strain 972 / ATCC 24843) (Fission yeast).